A 346-amino-acid chain; its full sequence is Annexin A1 (346 aa).

Phosphoserine; by TRPM7 is present on S5. Q19 is covalently cross-linked (Isoglutamyl lysine isopeptide (Gln-Lys) (interchain with K-?)). Phosphotyrosine; by EGFR is present on Y21. Phosphoserine occurs at positions 34 and 37. Annexin repeat units follow at residues 42-113, 114-185, 197-269, and 273-344; these read FNPS…ALLK, TPAR…SLAK, DLAD…AIVK, and SKPM…ALCG. N6-acetyllysine is present on K58. Residues G59, V60, E62, K97, L100, E105, M127, G129, G131, T132, and E134 each coordinate Ca(2+). T136 bears the Phosphothreonine mark. Residues D171, G210, and R213 each contribute to the Ca(2+) site. K214 participates in a covalent cross-link: Glycyl lysine isopeptide (Lys-Gly) (interchain with G-Cter in SUMO1); alternate. Residue K214 forms a Glycyl lysine isopeptide (Lys-Gly) (interchain with G-Cter in SUMO2); alternate linkage. Ca(2+)-binding residues include G215, D253, E255, and M256. K257 participates in a covalent cross-link: Glycyl lysine isopeptide (Lys-Gly) (interchain with G-Cter in SUMO1). E261, M286, G288, and G290 together coordinate Ca(2+). Residue K312 is modified to N6-acetyllysine. C324 and C343 are disulfide-bonded. 3 residues coordinate Ca(2+): L328, E330, and T331. K332 participates in a covalent cross-link: Glycyl lysine isopeptide (Lys-Gly) (interchain with G-Cter in SUMO1). E336 is a Ca(2+) binding site.

The protein belongs to the annexin family. Homodimer; non-covalently linked. Homodimer; linked by transglutamylation. Homodimers linked by transglutamylation are observed in placenta, but not in other tissues. Interacts with S100A11. Heterotetramer, formed by two molecules each of S100A11 and ANXA1. Interacts with DYSF. Interacts with EGFR. Phosphorylated by protein kinase C, EGFR and TRPM7. Phosphorylated in response to EGF treatment. Post-translationally, sumoylated. In terms of processing, proteolytically cleaved by cathepsin CTSG to release the active N-terminal peptide Ac2-26.

It localises to the nucleus. Its subcellular location is the cytoplasm. It is found in the cell projection. The protein localises to the cilium. The protein resides in the basolateral cell membrane. It localises to the lateral cell membrane. Its subcellular location is the cell membrane. It is found in the apical cell membrane. The protein localises to the membrane. The protein resides in the early endosome. It localises to the cytoplasmic vesicle membrane. Its subcellular location is the endosome membrane. It is found in the secreted. The protein localises to the extracellular space. The protein resides in the extracellular exosome. It localises to the cytoplasmic vesicle. Its subcellular location is the secretory vesicle lumen. It is found in the phagocytic cup. In terms of biological role, plays important roles in the innate immune response as effector of glucocorticoid-mediated responses and regulator of the inflammatory process. Has anti-inflammatory activity. Plays a role in glucocorticoid-mediated down-regulation of the early phase of the inflammatory response. Contributes to the adaptive immune response by enhancing signaling cascades that are triggered by T-cell activation, regulates differentiation and proliferation of activated T-cells. Promotes the differentiation of T-cells into Th1 cells and negatively regulates differentiation into Th2 cells. Has no effect on unstimulated T-cells. Negatively regulates hormone exocytosis via activation of the formyl peptide receptors and reorganization of the actin cytoskeleton. Has high affinity for Ca(2+) and can bind up to eight Ca(2+) ions. Displays Ca(2+)-dependent binding to phospholipid membranes. Plays a role in the formation of phagocytic cups and phagosomes. Plays a role in phagocytosis by mediating the Ca(2+)-dependent interaction between phagosomes and the actin cytoskeleton. Its function is as follows. Functions at least in part by activating the formyl peptide receptors and downstream signaling cascades. Promotes chemotaxis of granulocytes and monocytes via activation of the formyl peptide receptors. Promotes rearrangement of the actin cytoskeleton, cell polarization and cell migration. Promotes resolution of inflammation and wound healing. Acts via neutrophil N-formyl peptide receptors to enhance the release of CXCL2. This Equus caballus (Horse) protein is Annexin A1 (ANXA1).